We begin with the raw amino-acid sequence, 203 residues long: Anti-sigma-W factor RsiW (203 aa).

Residues 1–86 (MECPKEIVLL…TARLRRFLHR (86 aa)) lie on the Cytoplasmic side of the membrane. Residues histidine 30, cysteine 34, and cysteine 37 each coordinate Zn(2+). A helical membrane pass occupies residues 87–103 (HPLLTAASLFLALTLGS). At 104 to 203 (LASSWGERGA…RFNRALQSIE (100 aa)) the chain is on the extracellular side.

It belongs to the zinc-associated anti-sigma factor (ZAS) superfamily. Anti-sigma-W factor family. Zn(2+) is required as a cofactor. Post-translationally, is processed by three successive proteolytic events. First, the extracellular region of RsiW is cleaved by PrsW (Site-1 cleavage) in response to cell envelope stresses. Next, it undergoes cleavage at an intramembrane site (Site-2 cleavage) mediated by RasP. This cleavage uncovers a cryptic proteolytic tag with conserved alanine residues in the transmembrane segment, that is recognized mainly by the ClpXP protease, which completely degrades the protein in the cytoplasm and leads to the induction of the sigma-W-controlled genes.

Its subcellular location is the membrane. Functionally, is the anti-sigma factor for SigW. The presence of RsiW leads to the inactivation of SigW, and its proteolytic destruction to sigma-W activation. This Geobacillus kaustophilus (strain HTA426) protein is Anti-sigma-W factor RsiW (rsiW).